A 295-amino-acid chain; its full sequence is MLTALNRYWDYLRIERQMSPHTITNYQHQLDATIKILAQQDIHSWTQVTPSVVRFILAESKKQGLKEKSLALRLSALRRFLSFLVQQGELKVNPATGISAPKQGWHLPKNMDGEQIQQLLANDSKEPIDIRDRAILELMYSSGLRLSELQGLDLNSINTRVREVRVIGKGNKERVVPFGRYASHAIQEWLKVRALFNPKDEALFVSQLGNRISHRAIQKRLETWGIRQGLNSHLNPHKLRHSFATHMLEASSDLRAVQELLGHSNLSTTQIYTHLNFQHLAEVYDQAHPRAKRKK.

In terms of domain architecture, Core-binding (CB) spans 1–85; it reads MLTALNRYWD…ALRRFLSFLV (85 aa). The region spanning 106 to 285 is the Tyr recombinase domain; it reads HLPKNMDGEQ…NFQHLAEVYD (180 aa). Catalysis depends on residues Arg145, Lys169, His237, Arg240, and His263. The active-site O-(3'-phospho-DNA)-tyrosine intermediate is the Tyr272.

The protein belongs to the 'phage' integrase family. XerC subfamily. As to quaternary structure, forms a cyclic heterotetrameric complex composed of two molecules of XerC and two molecules of XerD.

It localises to the cytoplasm. In terms of biological role, site-specific tyrosine recombinase, which acts by catalyzing the cutting and rejoining of the recombining DNA molecules. The XerC-XerD complex is essential to convert dimers of the bacterial chromosome into monomers to permit their segregation at cell division. It also contributes to the segregational stability of plasmids. This Haemophilus influenzae (strain 86-028NP) protein is Tyrosine recombinase XerC.